The primary structure comprises 120 residues: Cytochrome c oxidase subunit 5 (120 aa).

Position 2 is a blocked amino end (Ser) (Ser-2). Residues Cys-76, His-84, Cys-99, and Cys-102 each contribute to the Zn(2+) site.

Belongs to the cytochrome c oxidase subunit 5B family. Component of the cytochrome c oxidase (complex IV, CIV), a multisubunit enzyme composed of a catalytic core of 3 subunits and several supernumerary subunits. The complex exists as a monomer or a dimer and forms supercomplexes (SCs) in the inner mitochondrial membrane with ubiquinol-cytochrome c oxidoreductase (cytochrome b-c1 complex, complex III, CIII). Slime mold cytochrome c oxidase consists of at least seven different polypeptides species, subunits I, II, III, IV, V, VI, and VIIe/s in order of MW.

The protein resides in the mitochondrion inner membrane. It participates in energy metabolism; oxidative phosphorylation. Component of the cytochrome c oxidase, the last enzyme in the mitochondrial electron transport chain which drives oxidative phosphorylation. The respiratory chain contains 3 multisubunit complexes succinate dehydrogenase (complex II, CII), ubiquinol-cytochrome c oxidoreductase (cytochrome b-c1 complex, complex III, CIII) and cytochrome c oxidase (complex IV, CIV), that cooperate to transfer electrons derived from NADH and succinate to molecular oxygen, creating an electrochemical gradient over the inner membrane that drives transmembrane transport and the ATP synthase. Cytochrome c oxidase is the component of the respiratory chain that catalyzes the reduction of oxygen to water. Electrons originating from reduced cytochrome c in the intermembrane space (IMS) are transferred via the dinuclear copper A center (CU(A)) of subunit 2 and heme A of subunit 1 to the active site in subunit 1, a binuclear center (BNC) formed by heme A3 and copper B (CU(B)). The BNC reduces molecular oxygen to 2 water molecules using 4 electrons from cytochrome c in the IMS and 4 protons from the mitochondrial matrix. This chain is Cytochrome c oxidase subunit 5 (cxeA), found in Dictyostelium discoideum (Social amoeba).